We begin with the raw amino-acid sequence, 734 residues long: Ribosomal RNA large subunit methyltransferase K/L (734 aa).

In terms of domain architecture, THUMP spans 49–167; it reads HAYRICMWSR…KTEHTYCLDL (119 aa).

Belongs to the methyltransferase superfamily. RlmKL family.

The protein localises to the cytoplasm. The enzyme catalyses guanosine(2445) in 23S rRNA + S-adenosyl-L-methionine = N(2)-methylguanosine(2445) in 23S rRNA + S-adenosyl-L-homocysteine + H(+). The catalysed reaction is guanosine(2069) in 23S rRNA + S-adenosyl-L-methionine = N(2)-methylguanosine(2069) in 23S rRNA + S-adenosyl-L-homocysteine + H(+). Functionally, specifically methylates the guanine in position 2445 (m2G2445) and the guanine in position 2069 (m7G2069) of 23S rRNA. This Acinetobacter baumannii (strain AYE) protein is Ribosomal RNA large subunit methyltransferase K/L.